The sequence spans 148 residues: Large ribosomal subunit protein uL15 (148 aa).

Residues Met1–Glu51 are disordered. Gly residues predominate over residues Arg21–Ser31.

It belongs to the universal ribosomal protein uL15 family. As to quaternary structure, part of the 50S ribosomal subunit.

Its function is as follows. Binds to the 23S rRNA. In Porphyromonas gingivalis (strain ATCC BAA-308 / W83), this protein is Large ribosomal subunit protein uL15.